An 839-amino-acid polypeptide reads, in one-letter code: Autophagy-related protein 9A (839 aa).

Residues 1–20 form a disordered region; the sequence is MAQFDTEYQRLEASYSDSPP. An N-acetylalanine modification is found at Ala2. The Cytoplasmic portion of the chain corresponds to 2-61; it reads AQFDTEYQRLEASYSDSPPGEEDLLVHVAEGSKSPWHHIENLDLFFSRVYNLHQKNGFTC. The Tyrosine-based sorting signal signature appears at 8-11; sequence YQRL. 3 positions are modified to phosphoserine: Ser14, Ser16, and Ser18. A helical transmembrane segment spans residues 62–84; the sequence is MLIGEIFELMQFLFVVAFTTFLV. Topologically, residues 85-128 are lumenal; the sequence is SCVDYDILFANKMVNHSLHPTEPVKVTLPDAFLPAQVCSARIQE. Asn99 is a glycosylation site (N-linked (GlcNAc...) asparagine). Residues 129–154 form a helical membrane-spanning segment; it reads NGSLITILVIAGVFWIHRLIKFIYNI. Residues 155 to 290 are Cytoplasmic-facing; it reads CCYWEIHSFY…ELAQRLSNRI (136 aa). An intramembrane segment occupies 291–301; it reads LWIGIANFLLC. The Cytoplasmic portion of the chain corresponds to 302-319; that stretch reads PLILIWQILYAFFSYAEV. An intramembrane segment occupies 320-328; it reads LKREPGALG. Topologically, residues 329-371 are cytoplasmic; the sequence is ARCWSLYGRCYLRHFNELEHELQSRLNRGYKPASKYMNCFLSP. The helical transmembrane segment at 372-397 threads the bilayer; that stretch reads LLTLLAKNGAFFAGSILAVLIALTIY. The Lumenal portion of the chain corresponds to 398–406; the sequence is DEDVLAVEH. The chain crosses the membrane as a helical span at residues 407–424; the sequence is VLTTVTLLGVTVTVCRSF. Topologically, residues 425–470 are cytoplasmic; sequence IPDQHMVFCPEQLLRVILAHIHYMPDHWQGNAHRSQTRDEFAQLFQ. An intramembrane segment occupies 471–480; sequence YKAVFILEEL. Residues 481-483 are Cytoplasmic-facing; that stretch reads LSP. An intramembrane segment occupies 484 to 492; the sequence is IVTPLILIF. Residues 493-839 lie on the Cytoplasmic side of the membrane; sequence CLRPRALEII…DELPPQVHKV (347 aa). Phosphoserine occurs at positions 656, 735, 738, 741, and 828. 2 disordered regions span residues 656–686 and 719–839; these read SPLQPGQAPTGRAHSTMTGSGVDARTASSGS and QQAQ…VHKV. Over residues 724 to 736 the composition is skewed to basic and acidic residues; it reads EPERHLWHRRESD. Composition is skewed to acidic residues over residues 737–747 and 823–832; these read ESGESAPDEGG and VPEEGSEDEL.

This sequence belongs to the ATG9 family. In terms of assembly, homotrimer; forms a homotrimer with a central pore that forms a path between the two membrane leaflets. Interacts (via cytoplasmic its C-terminus) with ATG2A. Interacts with SUPT20H. Interacts (via the tyrosine-based sorting signal motif) with AP4M1; promoting association with the AP-4 complex. Interacts with ARFIP1 and ARFIP2. Interacts with PI4K2A and PI4KB. Interacts with ATG4A; the interaction is direct and promotes ATG9A trafficking. Post-translationally, ufmylated in a DDRGK1 dependent manner.

It is found in the preautophagosomal structure membrane. It localises to the cytoplasmic vesicle. The protein localises to the autophagosome membrane. The protein resides in the golgi apparatus. Its subcellular location is the trans-Golgi network membrane. It is found in the late endosome membrane. It localises to the recycling endosome membrane. The protein localises to the endoplasmic reticulum membrane. The protein resides in the mitochondrion membrane. It carries out the reaction a 1,2-diacyl-sn-glycero-3-phosphocholine(in) = a 1,2-diacyl-sn-glycero-3-phosphocholine(out). The enzyme catalyses a 1,2-diacyl-sn-glycero-3-phospho-L-serine(in) = a 1,2-diacyl-sn-glycero-3-phospho-L-serine(out). The catalysed reaction is a 1,2-diacyl-sn-glycero-3-phosphoethanolamine(in) = a 1,2-diacyl-sn-glycero-3-phosphoethanolamine(out). In terms of biological role, phospholipid scramblase involved in autophagy by mediating autophagosomal membrane expansion. Cycles between the preautophagosomal structure/phagophore assembly site (PAS) and the cytoplasmic vesicle pool and supplies membrane for the growing autophagosome. Lipid scramblase activity plays a key role in preautophagosomal structure/phagophore assembly by distributing the phospholipids that arrive through ATG2 (ATG2A or ATG2B) from the cytoplasmic to the luminal leaflet of the bilayer, thereby driving autophagosomal membrane expansion. Also required to supply phosphatidylinositol 4-phosphate to the autophagosome initiation site by recruiting the phosphatidylinositol 4-kinase beta (PI4KB) in a process dependent on ARFIP2, but not ARFIP1. In addition to autophagy, also plays a role in necrotic cell death. This is Autophagy-related protein 9A from Pongo abelii (Sumatran orangutan).